Consider the following 940-residue polypeptide: Isoleucine--tRNA ligase (940 aa).

The short motif at 58–68 (PYANGSIHIGH) is the 'HIGH' region element. Residue Glu-564 coordinates L-isoleucyl-5'-AMP. Positions 605–609 (KMSKS) match the 'KMSKS' region motif. Lys-608 is an ATP binding site. The Zn(2+) site is built by Cys-903, Cys-906, Cys-923, and Cys-926.

It belongs to the class-I aminoacyl-tRNA synthetase family. IleS type 1 subfamily. In terms of assembly, monomer. The cofactor is Zn(2+).

It is found in the cytoplasm. It catalyses the reaction tRNA(Ile) + L-isoleucine + ATP = L-isoleucyl-tRNA(Ile) + AMP + diphosphate. In terms of biological role, catalyzes the attachment of isoleucine to tRNA(Ile). As IleRS can inadvertently accommodate and process structurally similar amino acids such as valine, to avoid such errors it has two additional distinct tRNA(Ile)-dependent editing activities. One activity is designated as 'pretransfer' editing and involves the hydrolysis of activated Val-AMP. The other activity is designated 'posttransfer' editing and involves deacylation of mischarged Val-tRNA(Ile). The sequence is that of Isoleucine--tRNA ligase from Shewanella sediminis (strain HAW-EB3).